Here is a 758-residue protein sequence, read N- to C-terminus: Deoxynucleotidyltransferase terminal-interacting protein 2 (758 aa).

Residues 1–21 (MVVTRSGLSRTRLQESSQQKR) show a composition bias toward polar residues. A disordered region spans residues 1–176 (MVVTRSGLSR…SQSGTVSDAE (176 aa)). Ser-17, Ser-133, Ser-137, and Ser-140 each carry phosphoserine. Over residues 128–143 (DEVVVSEAESHVSGVS) the composition is skewed to low complexity. Positions 155-172 (NKANSQRDSSQESQSGTV) are enriched in polar residues. Residues Ser-173 and Ser-183 each carry the phosphoserine modification. Lys-210 is covalently cross-linked (Glycyl lysine isopeptide (Lys-Gly) (interchain with G-Cter in SUMO2)). Ser-229, Ser-240, Ser-248, and Ser-255 each carry phosphoserine. The segment covering 231–255 (ATQLSARPLSQRNMPNVSDSETYNS) has biased composition (polar residues). Disordered stretches follow at residues 231–277 (ATQL…HQNL), 312–353 (KVIN…QLSS), 377–480 (DKRG…AEDL), and 501–552 (DKNF…DLLS). Lys-317 is covalently cross-linked (Glycyl lysine isopeptide (Lys-Gly) (interchain with G-Cter in SUMO2)). Polar residues predominate over residues 321–353 (RSLSEAQDTSLQQSVSQNHSSTPNKKPTFQLSS). Phosphoserine occurs at positions 324 and 330. Glycyl lysine isopeptide (Lys-Gly) (interchain with G-Cter in SUMO2) cross-links involve residues Lys-345 and Lys-384. A compositionally biased stretch (basic and acidic residues) spans 377–387 (DKRGGSGKKSD). Residues 431–440 (LSMTQDTTDS) show a composition bias toward polar residues. Residues 447–456 (SSDESQQSDS) show a composition bias toward low complexity. A phosphoserine mark is found at Ser-476 and Ser-512. Residues 512 to 541 (SEVAIEEEKEEEEKEEENSEEDSSDSDENK) adopt a coiled-coil conformation. The segment covering 515-550 (AIEEEKEEEEKEEENSEEDSSDSDENKDESSDEEDL) has biased composition (acidic residues). The tdBR region; mediates interaction with DNTT stretch occupies residues 550 to 607 (LLSNTKSKLLKLTSSSIDPGLNIKQLGGLYINFNVDKLQPHKETLTQIKEKKKNELLQ). Residues Lys-560, Lys-586, and Lys-608 each participate in a glycyl lysine isopeptide (Lys-Gly) (interchain with G-Cter in SUMO2) cross-link. Thr-612 is subject to Phosphothreonine. The disordered stretch occupies residues 621-647 (VPPYSESKHRLQKQRRKERQKTAGNGW). Lys-628 is covalently cross-linked (Glycyl lysine isopeptide (Lys-Gly) (interchain with G-Cter in SUMO2)). A compositionally biased stretch (basic residues) spans 630 to 639 (RLQKQRRKER). Residues Lys-651, Lys-660, Lys-688, and Lys-733 each participate in a glycyl lysine isopeptide (Lys-Gly) (interchain with G-Cter in SUMO2) cross-link.

As to quaternary structure, forms a ternary complex with DNTT and core histone; interaction with PCNA releases DNTT and H2A/H2B histones from this ternary complex. Interacts with ESR1, ESR2, PPARG and RXRA. Part of the small subunit (SSU) processome, composed of more than 70 proteins and the RNA chaperone small nucleolar RNA (snoRNA) U3.

The protein localises to the nucleus. The protein resides in the nucleolus. Regulates the transcriptional activity of DNTT and ESR1. May function as a chromatin remodeling protein. Part of the small subunit (SSU) processome, first precursor of the small eukaryotic ribosomal subunit. During the assembly of the SSU processome in the nucleolus, many ribosome biogenesis factors, an RNA chaperone and ribosomal proteins associate with the nascent pre-rRNA and work in concert to generate RNA folding, modifications, rearrangements and cleavage as well as targeted degradation of pre-ribosomal RNA by the RNA exosome. This is Deoxynucleotidyltransferase terminal-interacting protein 2 (Dnttip2) from Mus musculus (Mouse).